Here is a 307-residue protein sequence, read N- to C-terminus: Ribosomal RNA small subunit methyltransferase H (307 aa).

Residues 32–34 (GGH), Asp-52, Phe-78, Asp-99, and Gln-106 each bind S-adenosyl-L-methionine. The tract at residues 287-307 (KEEIESNKRSHSAKLRVAEKV) is disordered.

Belongs to the methyltransferase superfamily. RsmH family.

It localises to the cytoplasm. The catalysed reaction is cytidine(1402) in 16S rRNA + S-adenosyl-L-methionine = N(4)-methylcytidine(1402) in 16S rRNA + S-adenosyl-L-homocysteine + H(+). In terms of biological role, specifically methylates the N4 position of cytidine in position 1402 (C1402) of 16S rRNA. The protein is Ribosomal RNA small subunit methyltransferase H of Caldicellulosiruptor bescii (strain ATCC BAA-1888 / DSM 6725 / KCTC 15123 / Z-1320) (Anaerocellum thermophilum).